The chain runs to 185 residues: ATP synthase subunit delta (185 aa).

Belongs to the ATPase delta chain family. F-type ATPases have 2 components, F(1) - the catalytic core - and F(0) - the membrane proton channel. F(1) has five subunits: alpha(3), beta(3), gamma(1), delta(1), epsilon(1). CF(0) has four main subunits: a(1), b(1), b'(1) and c(10-14). The alpha and beta chains form an alternating ring which encloses part of the gamma chain. F(1) is attached to F(0) by a central stalk formed by the gamma and epsilon chains, while a peripheral stalk is formed by the delta, b and b' chains.

The protein localises to the cellular thylakoid membrane. Its function is as follows. F(1)F(0) ATP synthase produces ATP from ADP in the presence of a proton or sodium gradient. F-type ATPases consist of two structural domains, F(1) containing the extramembraneous catalytic core and F(0) containing the membrane proton channel, linked together by a central stalk and a peripheral stalk. During catalysis, ATP synthesis in the catalytic domain of F(1) is coupled via a rotary mechanism of the central stalk subunits to proton translocation. Functionally, this protein is part of the stalk that links CF(0) to CF(1). It either transmits conformational changes from CF(0) to CF(1) or is implicated in proton conduction. The sequence is that of ATP synthase subunit delta from Synechocystis sp. (strain ATCC 27184 / PCC 6803 / Kazusa).